The primary structure comprises 577 residues: Proline--tRNA ligase (577 aa).

Belongs to the class-II aminoacyl-tRNA synthetase family. ProS type 1 subfamily. Homodimer.

It is found in the cytoplasm. The enzyme catalyses tRNA(Pro) + L-proline + ATP = L-prolyl-tRNA(Pro) + AMP + diphosphate. In terms of biological role, catalyzes the attachment of proline to tRNA(Pro) in a two-step reaction: proline is first activated by ATP to form Pro-AMP and then transferred to the acceptor end of tRNA(Pro). As ProRS can inadvertently accommodate and process non-cognate amino acids such as alanine and cysteine, to avoid such errors it has two additional distinct editing activities against alanine. One activity is designated as 'pretransfer' editing and involves the tRNA(Pro)-independent hydrolysis of activated Ala-AMP. The other activity is designated 'posttransfer' editing and involves deacylation of mischarged Ala-tRNA(Pro). The misacylated Cys-tRNA(Pro) is not edited by ProRS. The sequence is that of Proline--tRNA ligase from Helicobacter pylori (strain Shi470).